We begin with the raw amino-acid sequence, 1342 residues long: DNA-directed RNA polymerase subunit beta (1342 aa).

This sequence belongs to the RNA polymerase beta chain family. In terms of assembly, the RNAP catalytic core consists of 2 alpha, 1 beta, 1 beta' and 1 omega subunit. When a sigma factor is associated with the core the holoenzyme is formed, which can initiate transcription.

It catalyses the reaction RNA(n) + a ribonucleoside 5'-triphosphate = RNA(n+1) + diphosphate. DNA-dependent RNA polymerase catalyzes the transcription of DNA into RNA using the four ribonucleoside triphosphates as substrates. The protein is DNA-directed RNA polymerase subunit beta of Edwardsiella ictaluri (strain 93-146).